Here is a 178-residue protein sequence, read N- to C-terminus: Acireductone dioxygenase (178 aa).

Residues H87, H89, E93, and H132 each contribute to the Fe(2+) site. Ni(2+) contacts are provided by H87, H89, E93, and H132.

Belongs to the acireductone dioxygenase (ARD) family. It depends on Fe(2+) as a cofactor. Ni(2+) serves as cofactor.

The protein resides in the cytoplasm. The protein localises to the nucleus. It catalyses the reaction 1,2-dihydroxy-5-(methylsulfanyl)pent-1-en-3-one + O2 = 4-methylsulfanyl-2-oxobutanoate + formate + 2 H(+). The catalysed reaction is 1,2-dihydroxy-5-(methylsulfanyl)pent-1-en-3-one + O2 = 3-(methylsulfanyl)propanoate + CO + formate + 2 H(+). It participates in amino-acid biosynthesis; L-methionine biosynthesis via salvage pathway; L-methionine from S-methyl-5-thio-alpha-D-ribose 1-phosphate: step 5/6. Functionally, catalyzes 2 different reactions between oxygen and the acireductone 1,2-dihydroxy-3-keto-5-methylthiopentene (DHK-MTPene) depending upon the metal bound in the active site. Fe-containing acireductone dioxygenase (Fe-ARD) produces formate and 2-keto-4-methylthiobutyrate (KMTB), the alpha-ketoacid precursor of methionine in the methionine recycle pathway. Ni-containing acireductone dioxygenase (Ni-ARD) produces methylthiopropionate, carbon monoxide and formate, and does not lie on the methionine recycle pathway. The sequence is that of Acireductone dioxygenase from Candida albicans (strain SC5314 / ATCC MYA-2876) (Yeast).